The chain runs to 515 residues: Bifunctional purine biosynthesis protein PurH (515 aa).

Residues 1–145 form the MGS-like domain; that stretch reads MTKRALISVS…KNHASVTVVV (145 aa).

It belongs to the PurH family.

It catalyses the reaction (6R)-10-formyltetrahydrofolate + 5-amino-1-(5-phospho-beta-D-ribosyl)imidazole-4-carboxamide = 5-formamido-1-(5-phospho-D-ribosyl)imidazole-4-carboxamide + (6S)-5,6,7,8-tetrahydrofolate. It carries out the reaction IMP + H2O = 5-formamido-1-(5-phospho-D-ribosyl)imidazole-4-carboxamide. It functions in the pathway purine metabolism; IMP biosynthesis via de novo pathway; 5-formamido-1-(5-phospho-D-ribosyl)imidazole-4-carboxamide from 5-amino-1-(5-phospho-D-ribosyl)imidazole-4-carboxamide (10-formyl THF route): step 1/1. Its pathway is purine metabolism; IMP biosynthesis via de novo pathway; IMP from 5-formamido-1-(5-phospho-D-ribosyl)imidazole-4-carboxamide: step 1/1. This is Bifunctional purine biosynthesis protein PurH from Streptococcus uberis (strain ATCC BAA-854 / 0140J).